The following is a 632-amino-acid chain: MHGLLLAGLAAALPLGVAGLPARQQSGLSPRGIDINPYRFASMAKYSEHKATSQMVHSFSYSKDDDYVATATKLVKSTFPNMTFRTVKDHYIGTNGIGHVHFKQTAHGIDIDNADFNVNIGRDGKVFTFGNSFYEGEMPKTNPLTKRDFADPVKALHGAIKTLKLPVKPQSAKAMPMKEAETFMFEGTSGALSEPMAKLVYIQKDGKLHLTWRVETDVGDNWLLSYVDSKETETVHNVVDYVASADYKVFAWGLNDPTEGQPTMIKDPWNTTGSGSPFTWHGDGEMDYTVTRGNNIAAQDNPSGGGQWENNYRPESPELSFVYEYNEQMEPEQYKDFAITQLFYTTNTFHDLLYSFGFTEEAGNFQMNNNGKGGEGNDFAICNAQDGSGTNNANFATPPDGQNGRMRMYTWTTAQPSRDGDLEAGIVIHEYAHGLSNRLCGGPANSNCLSELEAGGMGEGWGDFYATAIRLKQDDTRETDYTMGEWAANMEGGIREYPYSTNMQTNPYTYADVEGMSEVHGIGTVWATILYDVLWNLIDEHGMSKNIMPKFVNGAPSDGRNLAMKLVLDGMTLMPCNPNFVQARDAIIDADQALTNGQNKCALMKAFSKRGLGSNYKHGKNRVNNFDMPADC.

Positions 1–19 (MHGLLLAGLAAALPLGVAG) are cleaved as a signal peptide. Positions 20–244 (LPARQQSGLS…VHNVVDYVAS (225 aa)) are excised as a propeptide. Asn-270 carries an N-linked (GlcNAc...) asparagine glycan. His-429 is a binding site for Zn(2+). Glu-430 is an active-site residue. His-433 provides a ligand contact to Zn(2+).

It belongs to the peptidase M36 family. Requires Zn(2+) as cofactor.

It localises to the secreted. Secreted metalloproteinase probably acting as a virulence factor. In Trichophyton tonsurans (Scalp ringworm fungus), this protein is Extracellular metalloproteinase 2 (MEP2).